We begin with the raw amino-acid sequence, 86 residues long: Collagen alpha-1(XII) chain (86 aa).

Residues 1–12 show a composition bias toward pro residues; the sequence is NQPGPPGPPGPP. The disordered stretch occupies residues 1–86; that stretch reads NQPGPPGPPG…PGRPGDSGIR (86 aa). 14 positions are modified to hydroxyproline: proline 6, proline 9, proline 12, proline 18, proline 24, proline 27, proline 30, proline 42, proline 51, proline 54, proline 65, proline 74, proline 77, and proline 80. Residues 16-25 are compositionally biased toward gly residues; that stretch reads GEPGPGGRPG. Residues 35-50 show a composition bias toward low complexity; the sequence is PQGERGLPGEXGERGL. Low complexity predominate over residues 57–71; it reads QGESRTGPPGSTGSR.

This sequence belongs to the fibril-associated collagens with interrupted helices (FACIT) family. Trimer of identical chains each containing 190 kDa of non-triple-helical sequences. In terms of processing, the triple-helical tail is stabilized by disulfide bonds at each end. Prolines at the third position of the tripeptide repeating unit (G-X-Y) are hydroxylated in some or all of the chains.

It localises to the secreted. Its subcellular location is the extracellular space. The protein localises to the extracellular matrix. In terms of biological role, type XII collagen interacts with type I collagen-containing fibrils, the COL1 domain could be associated with the surface of the fibrils, and the COL2 and NC3 domains may be localized in the perifibrillar matrix. The sequence is that of Collagen alpha-1(XII) chain (COL12A1) from Bos taurus (Bovine).